The primary structure comprises 256 residues: Uridylate kinase (256 aa).

Residue 10-13 (KLSG) participates in ATP binding. G52 contributes to the UMP binding site. ATP contacts are provided by G53 and R57. UMP contacts are provided by residues D72 and 134–141 (NGQPFLTT). Positions 168 and 171 each coordinate ATP.

The protein belongs to the UMP kinase family. Homohexamer.

Its subcellular location is the cytoplasm. It catalyses the reaction UMP + ATP = UDP + ADP. It participates in pyrimidine metabolism; CTP biosynthesis via de novo pathway; UDP from UMP (UMPK route): step 1/1. Its activity is regulated as follows. Inhibited by UTP. Catalyzes the reversible phosphorylation of UMP to UDP. The protein is Uridylate kinase of Frankia alni (strain DSM 45986 / CECT 9034 / ACN14a).